The chain runs to 326 residues: Beta-ketoacyl-[acyl-carrier-protein] synthase III 2 (326 aa).

Catalysis depends on residues Cys-114 and His-251. The interval 252–256 (SANAR) is ACP-binding. Asn-281 is a catalytic residue.

The protein belongs to the thiolase-like superfamily. FabH family. As to quaternary structure, homodimer.

The protein localises to the cytoplasm. It catalyses the reaction malonyl-[ACP] + acetyl-CoA + H(+) = 3-oxobutanoyl-[ACP] + CO2 + CoA. It participates in lipid metabolism; fatty acid biosynthesis. Its function is as follows. Catalyzes the condensation reaction of fatty acid synthesis by the addition to an acyl acceptor of two carbons from malonyl-ACP. Catalyzes the first condensation reaction which initiates fatty acid synthesis and may therefore play a role in governing the total rate of fatty acid production. Possesses both acetoacetyl-ACP synthase and acetyl transacylase activities. Its substrate specificity determines the biosynthesis of branched-chain and/or straight-chain of fatty acids. This chain is Beta-ketoacyl-[acyl-carrier-protein] synthase III 2, found in Staphylococcus epidermidis (strain ATCC 12228 / FDA PCI 1200).